The primary structure comprises 477 residues: ACT domain-containing protein ACR1 (477 aa).

4 consecutive ACT domains span residues 38-124, 134-214, 283-358, and 361-441; these read LIKV…REVQ, AFEI…GDVS, MVNV…RASQ, and KLEI…MMPR. The short motif at 329 to 345 is the Bipartite nuclear localization signal element; the sequence is KKNGGTLETEGQRERLR.

As to expression, expressed in flowers and siliques.

It localises to the nucleus. May bind amino acids. In Arabidopsis thaliana (Mouse-ear cress), this protein is ACT domain-containing protein ACR1.